A 341-amino-acid polypeptide reads, in one-letter code: Heme A synthase (341 aa).

8 consecutive transmembrane segments (helical) span residues 7–27 (VTVW…IGGI), 92–112 (LFGR…AITK), 118–138 (MVAK…MGWF), 159–179 (LFLT…CAGV), 190–210 (FFTA…GALV), 253–273 (FLHR…PFWL), 280–300 (LFLA…VSVV), and 302–322 (IFLA…GVHM). Histidine 255 is a binding site for heme. Histidine 308 provides a ligand contact to heme.

This sequence belongs to the COX15/CtaA family. Type 2 subfamily. Interacts with CtaB. Heme b is required as a cofactor.

The protein resides in the cell membrane. The enzyme catalyses Fe(II)-heme o + 2 A + H2O = Fe(II)-heme a + 2 AH2. The protein operates within porphyrin-containing compound metabolism; heme A biosynthesis; heme A from heme O: step 1/1. In terms of biological role, catalyzes the conversion of heme O to heme A by two successive hydroxylations of the methyl group at C8. The first hydroxylation forms heme I, the second hydroxylation results in an unstable dihydroxymethyl group, which spontaneously dehydrates, resulting in the formyl group of heme A. This Anaplasma marginale (strain St. Maries) protein is Heme A synthase.